The primary structure comprises 783 residues: Endonuclease MutS2 (783 aa).

Glycine 337–threonine 344 is an ATP binding site. Residues leucine 708 to lysine 783 form the Smr domain.

Belongs to the DNA mismatch repair MutS family. MutS2 subfamily. Homodimer. Binds to stalled ribosomes, contacting rRNA.

In terms of biological role, endonuclease that is involved in the suppression of homologous recombination and thus may have a key role in the control of bacterial genetic diversity. Its function is as follows. Acts as a ribosome collision sensor, splitting the ribosome into its 2 subunits. Detects stalled/collided 70S ribosomes which it binds and splits by an ATP-hydrolysis driven conformational change. Acts upstream of the ribosome quality control system (RQC), a ribosome-associated complex that mediates the extraction of incompletely synthesized nascent chains from stalled ribosomes and their subsequent degradation. Probably generates substrates for RQC. The sequence is that of Endonuclease MutS2 from Staphylococcus haemolyticus (strain JCSC1435).